Reading from the N-terminus, the 420-residue chain is RING finger protein 39 (420 aa).

The RING-type zinc finger occupies 88-135; the sequence is CPLCGGSFEDPVLLACEHSFCRACLARRWGTPPATGTEASPTACPCCG. The B30.2/SPRY domain occupies 210–420; sequence DDLPEDYPVV…APLRIVPAES (211 aa). The segment at 246 to 265 is disordered; that stretch reads DRRSVQLAPPGTPAPPDGPK.

It is found in the cytoplasm. The catalysed reaction is S-ubiquitinyl-[E2 ubiquitin-conjugating enzyme]-L-cysteine + [acceptor protein]-L-lysine = [E2 ubiquitin-conjugating enzyme]-L-cysteine + N(6)-ubiquitinyl-[acceptor protein]-L-lysine.. It participates in protein modification; protein ubiquitination. Its function is as follows. Plays an inhibitory role in anti-RNA viral innate immunity by targeting the adapter DDX3X and promoting its 'Lys-48'-linked polyubiquitination. Alternatively, enhances the cGAS-STING pathway activation by promoting 'Lys-63'-linked ubiquitination of STING1, facilitating the STING1-TBK1 complex formation and STING1 activation. The polypeptide is RING finger protein 39 (RNF39) (Pan troglodytes (Chimpanzee)).